Reading from the N-terminus, the 355-residue chain is Protein MGF 360-3L (355 aa).

The stretch at 60-92 (KLNTALVLAVKENNYDLIVLFTEWGANINYALL) is one ANK repeat.

It belongs to the asfivirus MGF 360 family.

Functionally, plays a role in virus cell tropism, and may be required for efficient virus replication in macrophages. The protein is Protein MGF 360-3L of Ornithodoros (relapsing fever ticks).